The following is a 202-amino-acid chain: Protein FAR-RED ELONGATED HYPOCOTYL 1 (202 aa).

Phosphoserine is present on Ser-39. Positions 40–43 match the Nuclear localization sequence (NLS) motif; that stretch reads KKRK. The Nuclear export sequence (NES) motif lies at 54–57; that stretch reads LLPL. At Thr-61 the chain carries Phosphothreonine.

It belongs to the FHY1 protein family. As to quaternary structure, homodimer and heterodimer with FHL. Interacts with underphosphorylated PHYA, especially upon far-red (FR) light illumination. Binds to LAF1 and HFR1. Forms PHYA/FHY1/HFR1 complex in darkness but dissociates from PHYA and HFR1 in response to continuous FR light (FRc). Post-translationally, inactivated by rapid reversible PHYA-mediated phosphorylation at Ser-39 and Thr-61 in red light (R), thus inhibiting PHYA signaling in a negative feedback loop; this ensures the seedling deetiolation process in response to a R-enriched light condition. Subsequent exposure to far-red light (FR) after the R conditions leads to dephosphorylation. The phosphorylated form is cytoplasmic only and unable to bind to chromatin at direct target genes whereas the unphosphorylated form can shuttle from cytoplasm to nucleus. In terms of tissue distribution, expressed in hypocotyl cells of etiolated plants.

The protein localises to the nucleus. It is found in the cytoplasm. Its function is as follows. Key regulator of far red / red (FR/R) spectrum-specific responses essential for the adaption to changing light conditions (e.g. de-etiolation), essentially by regulating PHYA shuttling from the cytoplasm to the nucleus and by directly regulating the expression of some target genes, depending on light conditions and phosphorylation status. Binds chromatin at target genes promoters, especially in FR light conditions. Can activate transcription of different genes, some being in a phytochrome A (PHYA)-dependent and other in a PHYA-independent manners. Controls specific aspects of plant development, such as the inhibition of seed germination under FR during salt stress. Essential for light-regulated PHYA nuclear accumulation and subsequent PHYA phototropic signaling processes involved in photomorphogenesis. Mediates the association of PHYA with HFR1 and LAF1 in the nucleus in response to FR conditions. PHYA-specific signal transducer in response to continuous FR lights. Contributes to inhibition of hypocotyl elongation in continuous blue light (B). This Arabidopsis thaliana (Mouse-ear cress) protein is Protein FAR-RED ELONGATED HYPOCOTYL 1.